A 178-amino-acid polypeptide reads, in one-letter code: Large ribosomal subunit protein uL6 (178 aa).

Belongs to the universal ribosomal protein uL6 family. Part of the 50S ribosomal subunit.

In terms of biological role, this protein binds to the 23S rRNA, and is important in its secondary structure. It is located near the subunit interface in the base of the L7/L12 stalk, and near the tRNA binding site of the peptidyltransferase center. The sequence is that of Large ribosomal subunit protein uL6 from Staphylococcus carnosus (strain TM300).